Consider the following 1293-residue polypeptide: Phosphoribosylformylglycinamidine synthase (1293 aa).

ATP-binding positions include 305 to 316 and Ala676; that span reads GAATGSGGEIRD. Positions 305–327 are disordered; the sequence is GAATGSGGEIRDEGATGRGSKPK. 4 residues coordinate Mg(2+): Asp677, Glu716, Asn720, and Asp884. ATP is bound at residue Ser886. A Glutamine amidotransferase type-1 domain is found at 1040-1293; the sequence is MAILREQGVN…MFRNARVNLG (254 aa). Cys1133 functions as the Nucleophile in the catalytic mechanism. Residues His1258 and Glu1260 contribute to the active site.

It in the N-terminal section; belongs to the FGAMS family. As to quaternary structure, monomer.

The protein localises to the cytoplasm. The enzyme catalyses N(2)-formyl-N(1)-(5-phospho-beta-D-ribosyl)glycinamide + L-glutamine + ATP + H2O = 2-formamido-N(1)-(5-O-phospho-beta-D-ribosyl)acetamidine + L-glutamate + ADP + phosphate + H(+). Its pathway is purine metabolism; IMP biosynthesis via de novo pathway; 5-amino-1-(5-phospho-D-ribosyl)imidazole from N(2)-formyl-N(1)-(5-phospho-D-ribosyl)glycinamide: step 1/2. Its function is as follows. Phosphoribosylformylglycinamidine synthase involved in the purines biosynthetic pathway. Catalyzes the ATP-dependent conversion of formylglycinamide ribonucleotide (FGAR) and glutamine to yield formylglycinamidine ribonucleotide (FGAM) and glutamate. The protein is Phosphoribosylformylglycinamidine synthase of Shewanella oneidensis (strain ATCC 700550 / JCM 31522 / CIP 106686 / LMG 19005 / NCIMB 14063 / MR-1).